A 396-amino-acid chain; its full sequence is S-adenosylmethionine synthase (396 aa).

Histidine 15 is a binding site for ATP. Aspartate 17 is a Mg(2+) binding site. Glutamate 43 contributes to the K(+) binding site. L-methionine contacts are provided by glutamate 56 and glutamine 99. Residues 99-109 are flexible loop; it reads QSPDIALGVNR. ATP-binding positions include 175–177, 241–242, aspartate 250, 256–257, alanine 273, and lysine 277; these read DGK, RF, and RK. Aspartate 250 contributes to the L-methionine binding site. Residue lysine 281 coordinates L-methionine.

It belongs to the AdoMet synthase family. In terms of assembly, homotetramer; dimer of dimers. It depends on Mg(2+) as a cofactor. The cofactor is K(+).

Its subcellular location is the cytoplasm. The enzyme catalyses L-methionine + ATP + H2O = S-adenosyl-L-methionine + phosphate + diphosphate. Its pathway is amino-acid biosynthesis; S-adenosyl-L-methionine biosynthesis; S-adenosyl-L-methionine from L-methionine: step 1/1. Catalyzes the formation of S-adenosylmethionine (AdoMet) from methionine and ATP. The overall synthetic reaction is composed of two sequential steps, AdoMet formation and the subsequent tripolyphosphate hydrolysis which occurs prior to release of AdoMet from the enzyme. The chain is S-adenosylmethionine synthase from Carboxydothermus hydrogenoformans (strain ATCC BAA-161 / DSM 6008 / Z-2901).